A 380-amino-acid chain; its full sequence is MKLHEYQARDLLARFGIPVTGGGVAVTPVEARTIAAEIGGPVVVKAQVHVGGRGKAGGVKLAQTPTEAEQVARQILGMNIKGLTVEKVLVAEAVSYKRELYLSAILDRGSKRVMMIASAEGGVEIEEVAKTNPDAIIKIPAHPTMGLLDFQARELAFRIGLNDGKQARQFAQIASALYRAFVECDASLVEINPLVVKADGSLLALDSKILLDESALFRHPDLAALHDPSAEPEAERRAREAGITYIKLDGNIGCMVNGAGLAMATMDVIKLSGGEPANFLDIGGGAGKEKVKAALQIILSDPNVKAVLFNIFGGITRVDEVARGIIAALEEVPTDVPMVARLVGTNEEAGRALLAESKLIPAATLAEGAQKAVAAARGEL.

Residues 9–237 (RDLLARFGIP…PSAEPEAERR (229 aa)) enclose the ATP-grasp domain. Residues Lys45, 52 to 54 (GRG), Val94, and Glu99 contribute to the ATP site. Residues Asn192 and Asp206 each coordinate Mg(2+). Substrate is bound by residues Asn257 and 314–316 (GIT).

This sequence belongs to the succinate/malate CoA ligase beta subunit family. As to quaternary structure, heterotetramer of two alpha and two beta subunits. It depends on Mg(2+) as a cofactor.

The catalysed reaction is succinate + ATP + CoA = succinyl-CoA + ADP + phosphate. It catalyses the reaction GTP + succinate + CoA = succinyl-CoA + GDP + phosphate. The protein operates within carbohydrate metabolism; tricarboxylic acid cycle; succinate from succinyl-CoA (ligase route): step 1/1. In terms of biological role, succinyl-CoA synthetase functions in the citric acid cycle (TCA), coupling the hydrolysis of succinyl-CoA to the synthesis of either ATP or GTP and thus represents the only step of substrate-level phosphorylation in the TCA. The beta subunit provides nucleotide specificity of the enzyme and binds the substrate succinate, while the binding sites for coenzyme A and phosphate are found in the alpha subunit. The protein is Succinate--CoA ligase [ADP-forming] subunit beta of Chloroflexus aurantiacus (strain ATCC 29366 / DSM 635 / J-10-fl).